The chain runs to 192 residues: MEDSQPIKVRQPSISAPGTHLSPNPGQQSPSMVVPFQVSVSDLGVSEVSAQITLSSDPTLAQLTSIYRMASIVECEAVLFPNSTSSKNPVHCDLIWVPSNSSASPKTILQTYGGNRFTVGGPITSNQIISFPLRLDSVNPIIKDSVLYLDSPRLLAFSPAPPETQSIPSASLLIRGKLRLSSILVQPLLTSS.

Positions 1 to 30 are disordered; sequence MEDSQPIKVRQPSISAPGTHLSPNPGQQSP. A compositionally biased stretch (polar residues) spans 12–30; sequence PSISAPGTHLSPNPGQQSP.

This sequence belongs to the tymoviruses capsid protein family.

It is found in the virion. Its function is as follows. Self-assembles to form a T=3 icosahedral capsid composed of 180 copies of the capsid protein. The capsid encapsulates the single-stranded RNA genome. This chain is Capsid protein, found in Ononis.